We begin with the raw amino-acid sequence, 348 residues long: Dihydroorotase (348 aa).

The Zn(2+) site is built by His-17 and His-19. Substrate-binding positions include 19–21 (HLR) and Asn-45. Positions 103, 140, and 178 each coordinate Zn(2+). N6-carboxylysine is present on Lys-103. His-140 contacts substrate. Leu-223 is a substrate binding site. Asp-251 lines the Zn(2+) pocket. Asp-251 is a catalytic residue. 2 residues coordinate substrate: His-255 and Ala-267.

Belongs to the metallo-dependent hydrolases superfamily. DHOase family. Class II DHOase subfamily. As to quaternary structure, homodimer. It depends on Zn(2+) as a cofactor.

It carries out the reaction (S)-dihydroorotate + H2O = N-carbamoyl-L-aspartate + H(+). It participates in pyrimidine metabolism; UMP biosynthesis via de novo pathway; (S)-dihydroorotate from bicarbonate: step 3/3. Functionally, catalyzes the reversible cyclization of carbamoyl aspartate to dihydroorotate. This chain is Dihydroorotase, found in Yersinia pestis.